The sequence spans 293 residues: uncharacterized protein (293 aa).

Glu47 is a catalytic residue.

Belongs to the PhzF family.

This is an uncharacterized protein from Bacillus subtilis (strain 168).